The sequence spans 253 residues: Imidazole glycerol phosphate synthase subunit HisF (253 aa).

Residues D11 and D130 contribute to the active site.

It belongs to the HisA/HisF family. Heterodimer of HisH and HisF.

Its subcellular location is the cytoplasm. It catalyses the reaction 5-[(5-phospho-1-deoxy-D-ribulos-1-ylimino)methylamino]-1-(5-phospho-beta-D-ribosyl)imidazole-4-carboxamide + L-glutamine = D-erythro-1-(imidazol-4-yl)glycerol 3-phosphate + 5-amino-1-(5-phospho-beta-D-ribosyl)imidazole-4-carboxamide + L-glutamate + H(+). It participates in amino-acid biosynthesis; L-histidine biosynthesis; L-histidine from 5-phospho-alpha-D-ribose 1-diphosphate: step 5/9. Functionally, IGPS catalyzes the conversion of PRFAR and glutamine to IGP, AICAR and glutamate. The HisF subunit catalyzes the cyclization activity that produces IGP and AICAR from PRFAR using the ammonia provided by the HisH subunit. The chain is Imidazole glycerol phosphate synthase subunit HisF from Roseobacter denitrificans (strain ATCC 33942 / OCh 114) (Erythrobacter sp. (strain OCh 114)).